The following is a 273-amino-acid chain: NADPH-dependent 7-cyano-7-deazaguanine reductase (273 aa).

Residue valine 81–serine 83 coordinates substrate. Serine 83–lysine 84 contacts NADPH. Cysteine 179 (thioimide intermediate) is an active-site residue. Aspartate 186 functions as the Proton donor in the catalytic mechanism. Alanine 218–glutamate 219 contributes to the substrate binding site. Residue arginine 247–glycine 248 coordinates NADPH.

It belongs to the GTP cyclohydrolase I family. QueF type 2 subfamily. In terms of assembly, homodimer.

The protein resides in the cytoplasm. It catalyses the reaction 7-aminomethyl-7-carbaguanine + 2 NADP(+) = 7-cyano-7-deazaguanine + 2 NADPH + 3 H(+). It participates in tRNA modification; tRNA-queuosine biosynthesis. Its function is as follows. Catalyzes the NADPH-dependent reduction of 7-cyano-7-deazaguanine (preQ0) to 7-aminomethyl-7-deazaguanine (preQ1). This Rickettsia canadensis (strain McKiel) protein is NADPH-dependent 7-cyano-7-deazaguanine reductase.